The chain runs to 291 residues: Phosphate import ATP-binding protein PstB (291 aa).

The region spanning 44–286 is the ABC transporter domain; that stretch reads VKAREVNVFY…PEEKRTQDYI (243 aa). An ATP-binding site is contributed by 76-83; sequence GPSGCGKS.

The protein belongs to the ABC transporter superfamily. Phosphate importer (TC 3.A.1.7) family. As to quaternary structure, the complex is composed of two ATP-binding proteins (PstB), two transmembrane proteins (PstC and PstA) and a solute-binding protein (PstS).

It is found in the cell inner membrane. The enzyme catalyses phosphate(out) + ATP + H2O = ADP + 2 phosphate(in) + H(+). Part of the ABC transporter complex PstSACB involved in phosphate import. Responsible for energy coupling to the transport system. The sequence is that of Phosphate import ATP-binding protein PstB from Chelativorans sp. (strain BNC1).